A 206-amino-acid polypeptide reads, in one-letter code: 3-demethoxyubiquinol 3-hydroxylase (206 aa).

Positions 55, 85, 88, 137, 169, and 172 each coordinate Fe cation.

This sequence belongs to the COQ7 family. Requires Fe cation as cofactor.

The protein resides in the cell membrane. The enzyme catalyses a 5-methoxy-2-methyl-3-(all-trans-polyprenyl)benzene-1,4-diol + AH2 + O2 = a 3-demethylubiquinol + A + H2O. Its pathway is cofactor biosynthesis; ubiquinone biosynthesis. In terms of biological role, catalyzes the hydroxylation of 2-nonaprenyl-3-methyl-6-methoxy-1,4-benzoquinol during ubiquinone biosynthesis. The polypeptide is 3-demethoxyubiquinol 3-hydroxylase (Azoarcus sp. (strain BH72)).